Here is an 88-residue protein sequence, read N- to C-terminus: Small ribosomal subunit protein bS16 (88 aa).

This sequence belongs to the bacterial ribosomal protein bS16 family.

This Baumannia cicadellinicola subsp. Homalodisca coagulata protein is Small ribosomal subunit protein bS16.